The chain runs to 29 residues: MLQVFDIIGPIMIGPSESITAGAVRIXKI.

It belongs to the iron-sulfur dependent L-serine dehydratase family. In terms of assembly, heterodimer of an alpha chain and a beta chain. The cofactor is [4Fe-4S] cluster.

It catalyses the reaction L-serine = pyruvate + NH4(+). The protein operates within carbohydrate biosynthesis; gluconeogenesis. The polypeptide is L-serine dehydratase, beta chain (Anaerotignum propionicum (Clostridium propionicum)).